The following is a 141-amino-acid chain: Ribonuclease P protein component (141 aa).

Disordered regions lie at residues 37–56 (RTEE…VGFT) and 114–141 (RRIT…VNGK). Positions 114 to 123 (RRITAKGERR) are enriched in basic and acidic residues.

The protein belongs to the RnpA family. Consists of a catalytic RNA component (M1 or rnpB) and a protein subunit.

It carries out the reaction Endonucleolytic cleavage of RNA, removing 5'-extranucleotides from tRNA precursor.. In terms of biological role, RNaseP catalyzes the removal of the 5'-leader sequence from pre-tRNA to produce the mature 5'-terminus. It can also cleave other RNA substrates such as 4.5S RNA. The protein component plays an auxiliary but essential role in vivo by binding to the 5'-leader sequence and broadening the substrate specificity of the ribozyme. This Brucella suis biovar 1 (strain 1330) protein is Ribonuclease P protein component.